Here is a 173-residue protein sequence, read N- to C-terminus: Putative 4-hydroxy-4-methyl-2-oxoglutarate aldolase (173 aa).

Substrate is bound by residues 89-92 (GGNL) and Arg111. Asp112 is a binding site for a divalent metal cation.

This sequence belongs to the class II aldolase/RraA-like family. As to quaternary structure, homotrimer. The cofactor is a divalent metal cation.

It carries out the reaction 4-hydroxy-4-methyl-2-oxoglutarate = 2 pyruvate. The catalysed reaction is oxaloacetate + H(+) = pyruvate + CO2. Catalyzes the aldol cleavage of 4-hydroxy-4-methyl-2-oxoglutarate (HMG) into 2 molecules of pyruvate. Also contains a secondary oxaloacetate (OAA) decarboxylase activity due to the common pyruvate enolate transition state formed following C-C bond cleavage in the retro-aldol and decarboxylation reactions. This is Putative 4-hydroxy-4-methyl-2-oxoglutarate aldolase from Albidiferax ferrireducens (strain ATCC BAA-621 / DSM 15236 / T118) (Rhodoferax ferrireducens).